The following is a 337-amino-acid chain: 3-isopropylmalate dehydrogenase (337 aa).

4 residues coordinate substrate: Arg88, Arg98, Arg122, and Asp212. Residues Asp212, Asp236, and Asp240 each contribute to the Mg(2+) site. 272-284 (GSAPDIAGKGIAD) serves as a coordination point for NAD(+).

This sequence belongs to the isocitrate and isopropylmalate dehydrogenases family. LeuB type 2 subfamily. In terms of assembly, homodimer. Mg(2+) serves as cofactor. Mn(2+) is required as a cofactor.

The protein resides in the cytoplasm. It carries out the reaction (2R,3S)-3-isopropylmalate + NAD(+) = 4-methyl-2-oxopentanoate + CO2 + NADH. Its pathway is amino-acid biosynthesis; L-leucine biosynthesis; L-leucine from 3-methyl-2-oxobutanoate: step 3/4. In terms of biological role, catalyzes the oxidation of 3-carboxy-2-hydroxy-4-methylpentanoate (3-isopropylmalate) to 3-carboxy-4-methyl-2-oxopentanoate. The product decarboxylates to 4-methyl-2 oxopentanoate. The polypeptide is 3-isopropylmalate dehydrogenase (Rhodococcus erythropolis (strain PR4 / NBRC 100887)).